A 271-amino-acid polypeptide reads, in one-letter code: Formamidopyrimidine-DNA glycosylase (271 aa).

Catalysis depends on P2, which acts as the Schiff-base intermediate with DNA. Catalysis depends on E3, which acts as the Proton donor. Catalysis depends on K57, which acts as the Proton donor; for beta-elimination activity. Residues H90, R109, and K150 each coordinate DNA. An FPG-type zinc finger spans residues 235-269; that stretch reads LVYGNKDKPCPKCGGKIESLIIGQRNSFFCPKCQK. The active-site Proton donor; for delta-elimination activity is the R259.

This sequence belongs to the FPG family. As to quaternary structure, monomer. The cofactor is Zn(2+).

It catalyses the reaction Hydrolysis of DNA containing ring-opened 7-methylguanine residues, releasing 2,6-diamino-4-hydroxy-5-(N-methyl)formamidopyrimidine.. The catalysed reaction is 2'-deoxyribonucleotide-(2'-deoxyribose 5'-phosphate)-2'-deoxyribonucleotide-DNA = a 3'-end 2'-deoxyribonucleotide-(2,3-dehydro-2,3-deoxyribose 5'-phosphate)-DNA + a 5'-end 5'-phospho-2'-deoxyribonucleoside-DNA + H(+). Functionally, involved in base excision repair of DNA damaged by oxidation or by mutagenic agents. Acts as a DNA glycosylase that recognizes and removes damaged bases. Has a preference for oxidized purines, such as 7,8-dihydro-8-oxoguanine (8-oxoG). Has AP (apurinic/apyrimidinic) lyase activity and introduces nicks in the DNA strand. Cleaves the DNA backbone by beta-delta elimination to generate a single-strand break at the site of the removed base with both 3'- and 5'-phosphates. This chain is Formamidopyrimidine-DNA glycosylase (mutM), found in Haemophilus influenzae (strain ATCC 51907 / DSM 11121 / KW20 / Rd).